The chain runs to 250 residues: Triosephosphate isomerase (250 aa).

9–11 (NWK) serves as a coordination point for substrate. Residue histidine 94 is the Electrophile of the active site. Glutamate 166 functions as the Proton acceptor in the catalytic mechanism. Residues glycine 172, serine 212, and 233-234 (GG) each bind substrate.

Belongs to the triosephosphate isomerase family. Homodimer.

The protein resides in the cytoplasm. It catalyses the reaction D-glyceraldehyde 3-phosphate = dihydroxyacetone phosphate. It participates in carbohydrate biosynthesis; gluconeogenesis. The protein operates within carbohydrate degradation; glycolysis; D-glyceraldehyde 3-phosphate from glycerone phosphate: step 1/1. Its function is as follows. Involved in the gluconeogenesis. Catalyzes stereospecifically the conversion of dihydroxyacetone phosphate (DHAP) to D-glyceraldehyde-3-phosphate (G3P). The polypeptide is Triosephosphate isomerase (Clostridium novyi (strain NT)).